Consider the following 406-residue polypeptide: 2,3-bisphosphoglycerate-independent phosphoglycerate mutase (406 aa).

This sequence belongs to the BPG-independent phosphoglycerate mutase family. A-PGAM subfamily.

It catalyses the reaction (2R)-2-phosphoglycerate = (2R)-3-phosphoglycerate. Its pathway is carbohydrate degradation; glycolysis; pyruvate from D-glyceraldehyde 3-phosphate: step 3/5. Its function is as follows. Catalyzes the interconversion of 2-phosphoglycerate and 3-phosphoglycerate. This Methanococcus vannielii (strain ATCC 35089 / DSM 1224 / JCM 13029 / OCM 148 / SB) protein is 2,3-bisphosphoglycerate-independent phosphoglycerate mutase.